A 156-amino-acid polypeptide reads, in one-letter code: Ribosomal RNA large subunit methyltransferase H (156 aa).

Residues Leu73, Gly104, and 123–128 (LSALTL) each bind S-adenosyl-L-methionine.

It belongs to the RNA methyltransferase RlmH family. In terms of assembly, homodimer.

It is found in the cytoplasm. The catalysed reaction is pseudouridine(1915) in 23S rRNA + S-adenosyl-L-methionine = N(3)-methylpseudouridine(1915) in 23S rRNA + S-adenosyl-L-homocysteine + H(+). Functionally, specifically methylates the pseudouridine at position 1915 (m3Psi1915) in 23S rRNA. The polypeptide is Ribosomal RNA large subunit methyltransferase H (Shewanella piezotolerans (strain WP3 / JCM 13877)).